Here is a 90-residue protein sequence, read N- to C-terminus: Leech factor Xa inhibitor (90 aa).

The protein resides in the secreted. Potent anticoagulant inhibiting the amidolytic activity of factor Xa (F10) (Ki=4nM) and reducing its ability to activate prothrombin (F2) in the prothrombinase complex (EC(50)=40nM). This Haementeria depressa (Leech) protein is Leech factor Xa inhibitor.